The chain runs to 229 residues: Large ribosomal subunit protein uL1 (229 aa).

Belongs to the universal ribosomal protein uL1 family. In terms of assembly, part of the 50S ribosomal subunit.

Binds directly to 23S rRNA. The L1 stalk is quite mobile in the ribosome, and is involved in E site tRNA release. Its function is as follows. Protein L1 is also a translational repressor protein, it controls the translation of the L11 operon by binding to its mRNA. The chain is Large ribosomal subunit protein uL1 from Actinobacillus pleuropneumoniae serotype 5b (strain L20).